The chain runs to 334 residues: MRPVPLHPDILQAYAVLETGEPVCRELAFALGELHGPDVLDLASLAHKVKLRHGGSSGSIHACSIMNARSGVCSENCRFCAQSAHHQAAIDVYGLVDVDAVLFHARQTASEGISHFGIVTSGFGYKTLSKEFRQILAMIDRLHQELPDLEICASLGVLGEEPALELARHGIAQYNINIQVAPRRYGELIADTHSVDDRIDTIKRLRRNNIDVCCGGIIGVGEQMKERVEMIFAFADLDVSVIPLNILVPIDGTPLEGSPGIPLDDIVKTFALCRLVHPRKIIKIAAGRETVMKDFQGLLMLSGADGLLTGGYLTTRGRATADDRMFMRQLQWFN.

The 231-residue stretch at 55–285 (GSSGSIHACS…VHPRKIIKIA (231 aa)) folds into the Radical SAM core domain. Residues Cys73, Cys77, and Cys80 each coordinate [4Fe-4S] cluster. Cys152, Cys213, and Lys283 together coordinate [2Fe-2S] cluster.

This sequence belongs to the radical SAM superfamily. Biotin synthase family. In terms of assembly, homodimer. It depends on [4Fe-4S] cluster as a cofactor. [2Fe-2S] cluster serves as cofactor.

It carries out the reaction (4R,5S)-dethiobiotin + (sulfur carrier)-SH + 2 reduced [2Fe-2S]-[ferredoxin] + 2 S-adenosyl-L-methionine = (sulfur carrier)-H + biotin + 2 5'-deoxyadenosine + 2 L-methionine + 2 oxidized [2Fe-2S]-[ferredoxin]. It participates in cofactor biosynthesis; biotin biosynthesis; biotin from 7,8-diaminononanoate: step 2/2. Catalyzes the conversion of dethiobiotin (DTB) to biotin by the insertion of a sulfur atom into dethiobiotin via a radical-based mechanism. This Chlorobium phaeobacteroides (strain DSM 266 / SMG 266 / 2430) protein is Biotin synthase.